Reading from the N-terminus, the 506-residue chain is Probable alpha-L-arabinofuranosidase B (506 aa).

A signal peptide spans 1–26 (MSSGLSLERACAVALGIVASASLVAA). The segment at 27 to 343 (GPCDIYSSGG…ADIVAAKYAI (317 aa)) is catalytic. Cystine bridges form between cysteine 29–cysteine 39, cysteine 89–cysteine 94, and cysteine 184–cysteine 185. Asparagine 91 carries N-linked (GlcNAc...) asparagine glycosylation. Aspartate 227 contributes to the substrate binding site. The active-site Nucleophile is glutamate 229. Residues asparagine 230 and glycine 304 each coordinate substrate. Aspartate 305 serves as the catalytic Proton donor. An ABD region spans residues 344–506 (ASLTSGPALT…VSWVVSTGFA (163 aa)). Residues cysteine 409 and cysteine 447 are joined by a disulfide bond. Substrate-binding residues include histidine 424, asparagine 426, phenylalanine 427, aspartate 443, histidine 471, glutamate 473, leucine 476, and aspartate 496.

It belongs to the glycosyl hydrolase 54 family.

Its subcellular location is the secreted. It catalyses the reaction Hydrolysis of terminal non-reducing alpha-L-arabinofuranoside residues in alpha-L-arabinosides.. It participates in glycan metabolism; L-arabinan degradation. Alpha-L-arabinofuranosidase involved in the degradation of arabinoxylan, a major component of plant hemicellulose. Able to hydrolyze 1,5-, 1,3- and 1,2-alpha-linkages not only in L-arabinofuranosyl oligosaccharides, but also in polysaccharides containing terminal non-reducing L-arabinofuranoses in side chains, like L-arabinan, arabinogalactan and arabinoxylan. The sequence is that of Probable alpha-L-arabinofuranosidase B (abfB) from Aspergillus flavus (strain ATCC 200026 / FGSC A1120 / IAM 13836 / NRRL 3357 / JCM 12722 / SRRC 167).